The primary structure comprises 379 residues: Cytochrome b (379 aa).

Transmembrane regions (helical) follow at residues 33–53, 77–98, 113–133, and 178–198; these read FGSL…FLAM, WLIR…FIHV, WNIG…GYVL, and FFAF…VHLL. The heme b site is built by histidine 83 and histidine 97. Heme b is bound by residues histidine 182 and histidine 196. Histidine 201 is a binding site for a ubiquinone. The next 4 helical transmembrane spans lie at 226-246, 288-308, 320-340, and 347-367; these read TKDL…VLFF, LGGV…PLLN, VTQV…WIGG, and FTTI…ILIP.

The protein belongs to the cytochrome b family. As to quaternary structure, the cytochrome bc1 complex contains 11 subunits: 3 respiratory subunits (MT-CYB, CYC1 and UQCRFS1), 2 core proteins (UQCRC1 and UQCRC2) and 6 low-molecular weight proteins (UQCRH/QCR6, UQCRB/QCR7, UQCRQ/QCR8, UQCR10/QCR9, UQCR11/QCR10 and a cleavage product of UQCRFS1). This cytochrome bc1 complex then forms a dimer. The cofactor is heme b.

The protein resides in the mitochondrion inner membrane. Its function is as follows. Component of the ubiquinol-cytochrome c reductase complex (complex III or cytochrome b-c1 complex) that is part of the mitochondrial respiratory chain. The b-c1 complex mediates electron transfer from ubiquinol to cytochrome c. Contributes to the generation of a proton gradient across the mitochondrial membrane that is then used for ATP synthesis. The protein is Cytochrome b (MT-CYB) of Akodon cursor (Cursor grass mouse).